A 147-amino-acid polypeptide reads, in one-letter code: D-aminoacyl-tRNA deacylase (147 aa).

A Gly-cisPro motif, important for rejection of L-amino acids motif is present at residues 136 to 137 (GP).

It belongs to the DTD family. As to quaternary structure, homodimer.

The protein resides in the cytoplasm. It carries out the reaction glycyl-tRNA(Ala) + H2O = tRNA(Ala) + glycine + H(+). The enzyme catalyses a D-aminoacyl-tRNA + H2O = a tRNA + a D-alpha-amino acid + H(+). Functionally, an aminoacyl-tRNA editing enzyme that deacylates mischarged D-aminoacyl-tRNAs. Also deacylates mischarged glycyl-tRNA(Ala), protecting cells against glycine mischarging by AlaRS. Acts via tRNA-based rather than protein-based catalysis; rejects L-amino acids rather than detecting D-amino acids in the active site. By recycling D-aminoacyl-tRNA to D-amino acids and free tRNA molecules, this enzyme counteracts the toxicity associated with the formation of D-aminoacyl-tRNA entities in vivo and helps enforce protein L-homochirality. This chain is D-aminoacyl-tRNA deacylase, found in Streptococcus sanguinis (strain SK36).